The sequence spans 101 residues: Apolipoprotein C-II (101 aa).

An N-terminal signal peptide occupies residues 1-22 (MGTRFLLALFLVLLVLGFEVQG). Residues 66 to 74 (TVDEKLRDM) are lipid binding. Residues 78 to 101 (STAAMSTYAGILTDQVLSMLKGEE) are lipoprotein lipase cofactor.

The protein belongs to the apolipoprotein C2 family. Proapolipoprotein C-II is synthesized as a sialic acid containing glycoprotein which is subsequently desialylated prior to its proteolytic processing. In terms of processing, proapolipoprotein C-II, the major form found in plasma undergoes proteolytic cleavage of its N-terminal hexapeptide to generate apolipoprotein C-II, which occurs as the minor form in plasma.

Its subcellular location is the secreted. In terms of biological role, component of chylomicrons, very low-density lipoproteins (VLDL), low-density lipoproteins (LDL), and high-density lipoproteins (HDL) in plasma. Plays an important role in lipoprotein metabolism as an activator of lipoprotein lipase. Both proapolipoprotein C-II and apolipoprotein C-II can activate lipoprotein lipase. The protein is Apolipoprotein C-II (APOC2) of Aotus nancymaae (Ma's night monkey).